A 169-amino-acid chain; its full sequence is Ribosome maturation factor RimM (169 aa).

Positions 95 to 169 (EDGYYWTDLI…QITVDWELGY (75 aa)) constitute a PRC barrel domain.

The protein belongs to the RimM family. Binds ribosomal protein uS19.

The protein localises to the cytoplasm. Its function is as follows. An accessory protein needed during the final step in the assembly of 30S ribosomal subunit, possibly for assembly of the head region. Essential for efficient processing of 16S rRNA. May be needed both before and after RbfA during the maturation of 16S rRNA. It has affinity for free ribosomal 30S subunits but not for 70S ribosomes. The chain is Ribosome maturation factor RimM from Nitrosomonas europaea (strain ATCC 19718 / CIP 103999 / KCTC 2705 / NBRC 14298).